A 350-amino-acid chain; its full sequence is Histidinol-phosphate aminotransferase (350 aa).

Lys-210 carries the N6-(pyridoxal phosphate)lysine modification.

It belongs to the class-II pyridoxal-phosphate-dependent aminotransferase family. Histidinol-phosphate aminotransferase subfamily. In terms of assembly, homodimer. Pyridoxal 5'-phosphate serves as cofactor.

It carries out the reaction L-histidinol phosphate + 2-oxoglutarate = 3-(imidazol-4-yl)-2-oxopropyl phosphate + L-glutamate. Its pathway is amino-acid biosynthesis; L-histidine biosynthesis; L-histidine from 5-phospho-alpha-D-ribose 1-diphosphate: step 7/9. This Pseudomonas syringae pv. syringae (strain B728a) protein is Histidinol-phosphate aminotransferase.